We begin with the raw amino-acid sequence, 629 residues long: tRNA uridine 5-carboxymethylaminomethyl modification enzyme MnmG (629 aa).

FAD contacts are provided by residues 13–18, V125, and S180; that span reads GGGHAG. NAD(+) is bound at residue 273–287; that stretch reads GPRYCPSIEDKVMRF. Q370 provides a ligand contact to FAD.

This sequence belongs to the MnmG family. As to quaternary structure, homodimer. Heterotetramer of two MnmE and two MnmG subunits. Requires FAD as cofactor.

The protein localises to the cytoplasm. NAD-binding protein involved in the addition of a carboxymethylaminomethyl (cmnm) group at the wobble position (U34) of certain tRNAs, forming tRNA-cmnm(5)s(2)U34. The polypeptide is tRNA uridine 5-carboxymethylaminomethyl modification enzyme MnmG (Salmonella typhi).